We begin with the raw amino-acid sequence, 502 residues long: 2-isopropylmalate synthase (502 aa).

Asp1, His189, His191, and Asn225 together coordinate Mn(2+). A Pyruvate carboxyltransferase domain is found at 1–254 (DGEQALQASL…STNINHKEIY (254 aa)). The interval 379-502 (CLKFFSVQSI…VNKNLKNLKK (124 aa)) is regulatory domain.

The protein belongs to the alpha-IPM synthase/homocitrate synthase family. LeuA type 1 subfamily. In terms of assembly, homodimer. Requires Mn(2+) as cofactor.

The protein resides in the cytoplasm. The enzyme catalyses 3-methyl-2-oxobutanoate + acetyl-CoA + H2O = (2S)-2-isopropylmalate + CoA + H(+). Its pathway is amino-acid biosynthesis; L-leucine biosynthesis; L-leucine from 3-methyl-2-oxobutanoate: step 1/4. Functionally, catalyzes the condensation of the acetyl group of acetyl-CoA with 3-methyl-2-oxobutanoate (2-ketoisovalerate) to form 3-carboxy-3-hydroxy-4-methylpentanoate (2-isopropylmalate). The sequence is that of 2-isopropylmalate synthase from Buchnera aphidicola subsp. Uroleucon sonchi.